The sequence spans 174 residues: Co-chaperone protein HscB homolog (174 aa).

Residues 2 to 74 (NYFELFKFSP…IRRAEHMLSL (73 aa)) form the J domain.

It belongs to the HscB family. As to quaternary structure, interacts with HscA and stimulates its ATPase activity.

Functionally, co-chaperone involved in the maturation of iron-sulfur cluster-containing proteins. Seems to help targeting proteins to be folded toward HscA. The polypeptide is Co-chaperone protein HscB homolog (Shewanella baltica (strain OS155 / ATCC BAA-1091)).